We begin with the raw amino-acid sequence, 143 residues long: Cofilin (143 aa).

An ADF-H domain is found at 5–137 (GVAVSDEALK…AYESVLEKIS (133 aa)).

It belongs to the actin-binding proteins ADF family.

Its subcellular location is the cytoplasm. It localises to the cytoskeleton. It is found in the nucleus matrix. In terms of biological role, controls reversibly actin polymerization and depolymerization in a pH-sensitive manner. It has the ability to bind G- and F-actin in a 1:1 ratio of cofilin to actin. Binding to F-actin is regulated by tropomyosin. It is the major component of intranuclear and cytoplasmic actin rods. Required for accumulation of actin at the cell division site via depolymerizing actin at the cell ends. In association with myosin II has a role in the assembly of the contractile ring via severing actin filaments. Involved in the maintenance of the contractile ring once formed. In association with profilin and capping protein, has a role in the mitotic reorganization of the actin cytoskeleton. This Ogataea parapolymorpha (strain ATCC 26012 / BCRC 20466 / JCM 22074 / NRRL Y-7560 / DL-1) (Yeast) protein is Cofilin (COF1).